Reading from the N-terminus, the 258-residue chain is Phosphate import ATP-binding protein PstB (258 aa).

One can recognise an ABC transporter domain in the interval 5 to 253; the sequence is LDLNDVNIYY…PTKKETEDYI (249 aa). 37–44 contacts ATP; that stretch reads GPSGCGKS.

It belongs to the ABC transporter superfamily. Phosphate importer (TC 3.A.1.7) family. As to quaternary structure, the complex is composed of two ATP-binding proteins (PstB), two transmembrane proteins (PstC and PstA) and a solute-binding protein (PstS).

The protein localises to the cell membrane. The enzyme catalyses phosphate(out) + ATP + H2O = ADP + 2 phosphate(in) + H(+). Functionally, part of the ABC transporter complex PstSACB involved in phosphate import. Responsible for energy coupling to the transport system. This is Phosphate import ATP-binding protein PstB from Corynebacterium jeikeium (strain K411).